The following is a 321-amino-acid chain: tRNA-dihydrouridine synthase B (321 aa).

Residues P16–A18 and Q70 contribute to the FMN site. C100 (proton donor) is an active-site residue. FMN contacts are provided by residues K139, N200–D202, and G224–R225.

Belongs to the Dus family. DusB subfamily. Requires FMN as cofactor.

The catalysed reaction is a 5,6-dihydrouridine in tRNA + NAD(+) = a uridine in tRNA + NADH + H(+). It carries out the reaction a 5,6-dihydrouridine in tRNA + NADP(+) = a uridine in tRNA + NADPH + H(+). In terms of biological role, catalyzes the synthesis of 5,6-dihydrouridine (D), a modified base found in the D-loop of most tRNAs, via the reduction of the C5-C6 double bond in target uridines. This chain is tRNA-dihydrouridine synthase B, found in Salmonella typhi.